The following is a 1188-amino-acid chain: Probable phosphoenolpyruvate synthase (1188 aa).

One can recognise a DOD-type homing endonuclease domain in the interval 536–670; that stretch reads LGGAVLSDGH…LIVGLYRLGI (135 aa). The Tele-phosphohistidine intermediate role is filled by His824. Substrate contacts are provided by Arg917, Arg964, Glu1061, Gly1083, Thr1084, Asn1085, and Asp1086. Glu1061 provides a ligand contact to Mg(2+). Mg(2+) is bound at residue Asp1086. The active-site Proton donor is the Cys1133.

It belongs to the PEP-utilizing enzyme family. Requires Mg(2+) as cofactor. Post-translationally, this protein undergoes a protein self splicing that involves a post-translational excision of the intervening region (intein) followed by peptide ligation.

It catalyses the reaction pyruvate + ATP + H2O = phosphoenolpyruvate + AMP + phosphate + 2 H(+). Its pathway is carbohydrate biosynthesis; gluconeogenesis. In terms of biological role, catalyzes the phosphorylation of pyruvate to phosphoenolpyruvate. This Methanocaldococcus jannaschii (strain ATCC 43067 / DSM 2661 / JAL-1 / JCM 10045 / NBRC 100440) (Methanococcus jannaschii) protein is Probable phosphoenolpyruvate synthase (ppsA).